A 202-amino-acid polypeptide reads, in one-letter code: FMN-dependent NADH:quinone oxidoreductase 2 (202 aa).

Residues Ser-9, 15–17 (SAS), and 95–98 (MWNL) contribute to the FMN site.

The protein belongs to the azoreductase type 1 family. In terms of assembly, homodimer. The cofactor is FMN.

The catalysed reaction is 2 a quinone + NADH + H(+) = 2 a 1,4-benzosemiquinone + NAD(+). The enzyme catalyses N,N-dimethyl-1,4-phenylenediamine + anthranilate + 2 NAD(+) = 2-(4-dimethylaminophenyl)diazenylbenzoate + 2 NADH + 2 H(+). Functionally, quinone reductase that provides resistance to thiol-specific stress caused by electrophilic quinones. Also exhibits azoreductase activity. Catalyzes the reductive cleavage of the azo bond in aromatic azo compounds to the corresponding amines. The sequence is that of FMN-dependent NADH:quinone oxidoreductase 2 from Hahella chejuensis (strain KCTC 2396).